A 416-amino-acid polypeptide reads, in one-letter code: Enterobactin exporter EntS (416 aa).

Residues 1–21 (MNKQSWLLNLSLLKTHPAFRA) are Cytoplasmic-facing. The chain crosses the membrane as a helical span at residues 22–42 (VFLARFISIVSLGLLGVAVPV). Topologically, residues 43 to 55 (QIQMMTHSTWQVG) are periplasmic. Residues 56–76 (LSVTLTGGAMFVGLMVGGVLA) form a helical membrane-spanning segment. The Cytoplasmic portion of the chain corresponds to 77 to 83 (DRYERKK). A helical membrane pass occupies residues 84 to 104 (VILLARGTCGIGFIGLCLNAL). Topologically, residues 105 to 109 (LPEPS) are periplasmic. Residues 110 to 130 (LLAIYLLGLWDGFFASLGVTA) traverse the membrane as a helical segment. At 131–156 (LLAATPALVGRENLMQAGAITMLTVR) the chain is on the cytoplasmic side. A helical transmembrane segment spans residues 157–177 (LGSVISPMIGGLLLATGGVAW). Position 178 (N178) is a topological domain, periplasmic. A helical transmembrane segment spans residues 179-199 (YGLAAAGTFITLLPLLSLPAL). The Cytoplasmic portion of the chain corresponds to 200 to 218 (PPPPQPREHPLKSLLAGFR). The helical transmembrane segment at 219-239 (FLLASPLVGGIALLGGLLTMA) threads the bilayer. The Periplasmic portion of the chain corresponds to 240 to 256 (SAVRVLYPALADNWQMS). A helical transmembrane segment spans residues 257-277 (AAQIGFLYAAIPLGAAIGALT). Topologically, residues 278–287 (SGKLAHSARP) are cytoplasmic. A helical membrane pass occupies residues 288-307 (GLLMLLSTLGSFLAIGLFGL). The Periplasmic segment spans residues 308 to 313 (MPMWIL). A helical membrane pass occupies residues 314-336 (GVVCLALFGWLSAVSSLLQYTML). Over 337-356 (QTQTPEAMLGRINGLWTAQN) the chain is Cytoplasmic. A helical membrane pass occupies residues 357 to 377 (VTGDAIGAALLGGLGAMMTPV). A378 is a topological domain (periplasmic). Residues 379-399 (SASASGFGLLIIGVLLLLVLV) form a helical membrane-spanning segment. At 400–416 (ELRRFRQTPPQVTASDS) the chain is on the cytoplasmic side.

The protein belongs to the major facilitator superfamily. EntS (TC 2.A.1.38) family.

It is found in the cell inner membrane. Functionally, component of an export pathway for enterobactin. This Escherichia coli (strain 55989 / EAEC) protein is Enterobactin exporter EntS.